We begin with the raw amino-acid sequence, 976 residues long: Poly(ADP-ribose) glycohydrolase (976 aa).

Residue methionine 1 is modified to N-acetylmethionine. A disordered region spans residues 1 to 69 (MNAGPGCEPC…GRAGQHRGSA (69 aa)). The interval 1–456 (MNAGPGCEPC…LSPDKKWLGT (456 aa)) is A-domain. Positions 10–16 (CTKRPRW) match the Nuclear localization signal motif. At serine 22 the chain carries Phosphoserine. Over residues 37 to 46 (RVLDPKDAHV) the composition is skewed to basic and acidic residues. Serine 68 carries the phosphoserine modification. A PIP-box (PCNA interacting peptide) motif is present at residues 76 to 83 (QKTITSWM). Residues serine 133 and serine 137 each carry the phosphoserine modification. A Phosphothreonine modification is found at threonine 139. Positions 183–350 (SNANIDRSPQ…PSRFQARDAD (168 aa)) are disordered. Basic and acidic residues-rich tracts occupy residues 191–206 (PQNDDHSDTDSEENRD) and 222–233 (TTEDEQAREAKS). Phosphoserine is present on serine 197. At threonine 199 the chain carries Phosphothreonine. Phosphoserine is present on residues serine 261, serine 264, serine 286, serine 291, serine 298, serine 302, and serine 316. A compositionally biased stretch (acidic residues) spans 316–331 (SEADEETSPGFDEQED). A compositionally biased stretch (polar residues) spans 332–342 (GSSSQTANKPS). The residue at position 340 (lysine 340) is an N6-acetyllysine. A Phosphoserine modification is found at serine 448. Positions 610–795 (QPIPLLKQKM…TEQYSEYTGY (186 aa)) are catalytic. Residue 726-727 (IE) coordinates substrate. The active site involves aspartate 737. Positions 740 and 754 each coordinate substrate. Residues glutamate 755 and glutamate 756 contribute to the active site. Substrate-binding positions include tyrosine 795 and 869 to 874 (NWGCGA).

It belongs to the poly(ADP-ribose) glycohydrolase family. As to quaternary structure, interacts with PCNA. Interacts with NUDT5. As to expression, ubiquitously expressed.

Its subcellular location is the nucleus. It localises to the cytoplasm. The protein resides in the mitochondrion. It is found in the mitochondrion matrix. The catalysed reaction is [(1''-&gt;2')-ADP-alpha-D-ribose](n) + H2O = [(1''-&gt;2')-ADP-alpha-D-ribose](n-1) + ADP-D-ribose. Functionally, poly(ADP-ribose) glycohydrolase that degrades poly(ADP-ribose) by hydrolyzing the ribose-ribose bonds present in poly(ADP-ribose). PARG acts both as an endo- and exoglycosidase, releasing poly(ADP-ribose) of different length as well as ADP-ribose monomers. It is however unable to cleave the ester bond between the terminal ADP-ribose and ADP-ribosylated residues, leaving proteins that are mono-ADP-ribosylated. Poly(ADP-ribose) is synthesized after DNA damage is only present transiently and is rapidly degraded by PARG. Required to prevent detrimental accumulation of poly(ADP-ribose) upon prolonged replicative stress, while it is not required for recovery from transient replicative stress. Responsible for the prevalence of mono-ADP-ribosylated proteins in cells, thanks to its ability to degrade poly(ADP-ribose) without cleaving the terminal protein-ribose bond. Required for retinoid acid-dependent gene transactivation, probably by removing poly(ADP-ribose) from histone demethylase KDM4D, allowing chromatin derepression at RAR-dependent gene promoters. Involved in the synthesis of ATP in the nucleus, together with PARP1, NMNAT1 and NUDT5. Nuclear ATP generation is required for extensive chromatin remodeling events that are energy-consuming. The chain is Poly(ADP-ribose) glycohydrolase from Homo sapiens (Human).